A 163-amino-acid polypeptide reads, in one-letter code: Cytochrome c-type biogenesis protein CcmE (163 aa).

At 1–8 (MNPRRKKR) the chain is on the cytoplasmic side. Residues 9–29 (LTIILAISAGLAAVIGLVLYA) traverse the membrane as a helical; Signal-anchor for type II membrane protein segment. Residues 30 to 163 (LSQNIDLFYT…TEAQLKGAKQ (134 aa)) are Periplasmic-facing. Heme-binding residues include H131 and Y135.

It belongs to the CcmE/CycJ family.

The protein localises to the cell inner membrane. Functionally, heme chaperone required for the biogenesis of c-type cytochromes. Transiently binds heme delivered by CcmC and transfers the heme to apo-cytochromes in a process facilitated by CcmF and CcmH. The sequence is that of Cytochrome c-type biogenesis protein CcmE from Aeromonas salmonicida (strain A449).